We begin with the raw amino-acid sequence, 1074 residues long: MENWTGRPWLYLLLLLSLPQLCLDQEVLSGHSLQTPTEEGQGPEGVWGPWVQWASCSQPCGVGVQRRSRTCQLPTVQLHPSLPLPPRPPRHPEALLPRGQGPRPQTSPETLPLYRTQSRGRGGPLRGPASHLGREETQEIRAARRSRLRDPIKPGMFGYGRVPFALPLHRNRRHPRSPPRSELSLISSRGEEAIPSPTPRAEPFSANGSPQTELPPTELSVHTPSPQAEPLSPETAQTEVAPRTRPAPLRHHPRAQASGTEPPSPTHSLGEGGFFRASPQPRRPSSQGWASPQVAGRRPDPFPSVPRGRGQQGQGPWGTGGTPHGPRLEPDPQHPGAWLPLLSNGPHASSLWSLFAPSSPIPRCSGESEQLRACSQAPCPPEQPDPRALQCAAFNSQEFMGQLYQWEPFTEVQGSQRCELNCRPRGFRFYVRHTEKVQDGTLCQPGAPDICVAGRCLSPGCDGILGSGRRPDGCGVCGGDDSTCRLVSGNLTDRGGPLGYQKILWIPAGALRLQIAQLRPSSNYLALRGPGGRSIINGNWAVDPPGSYRAGGTVFRYNRPPREEGKGESLSAEGPTTQPVDVYMIFQEENPGVFYQYVISSPPPILENPTPEPPVPQLQPEILRVEPPLAPAPRPARTPGTLQRQVRIPQMPAPPHPRTPLGSPAAYWKRVGHSACSASCGKGVWRPIFLCISRESGEELDERSCAAGARPPASPEPCHGTPCPPYWEAGEWTSCSRSCGPGTQHRQLQCRQEFGGGGSSVPPERCGHLPRPNITQSCQLRLCGHWEVGSPWSQCSVRCGRGQRSRQVRCVGNNGDEVSEQECASGPPQPPSREACDMGPCTTAWFHSDWSSKCSAECGTGIQRRSVVCLGSGAALGPGQGEAGAGTGQSCPTGSRPPDMRACSLGPCERTWRWYTGPWGECSSECGSGTQRRDIICVSKLGTEFNVTSPSNCSHLPRPPALQPCQGQACQDRWFSTPWSPCSRSCQGGTQTREVQCLSTNQTLSTRCPPQLRPSRKRPCNSQPCSQRPDDQCKDSSPHCPLVVQARLCVYPYYTATCCRSCAHVLERSPQDPS.

The N-terminal stretch at 1-24 is a signal peptide; that stretch reads MENWTGRPWLYLLLLLSLPQLCLD. The region spanning 48–93 is the TSP type-1 1 domain; it reads GPWVQWASCSQPCGVGVQRRSRTCQLPTVQLHPSLPLPPRPPRHPE. Residues 77 to 342 are disordered; the sequence is QLHPSLPLPP…QHPGAWLPLL (266 aa). Over residues 103-119 the composition is skewed to polar residues; it reads RPQTSPETLPLYRTQSR. A compositionally biased stretch (basic and acidic residues) spans 132 to 152; the sequence is LGREETQEIRAARRSRLRDPI. Polar residues predominate over residues 206–226; that stretch reads ANGSPQTELPPTELSVHTPSP. Gly residues predominate over residues 310–323; it reads GQQGQGPWGTGGTP. Asn490 carries an N-linked (GlcNAc...) (complex) asparagine glycan. TSP type-1 domains are found at residues 723–782, 783–842, 845–909, 910–969, and 970–1026; these read CPPY…QLRL, CGHW…GPCT, WFHS…GPCE, RTWR…QGQA, and CQDR…QPCS. An N-linked (GlcNAc...) asparagine glycan is attached at Asn773. One can recognise a PLAC domain in the interval 1029–1066; it reads PDDQCKDSSPHCPLVVQARLCVYPYYTATCCRSCAHVL.

In terms of assembly, interacts with CTSB. Interacts with FBN1. N-glycosylated. Can be O-fucosylated by POFUT2 on a serine or a threonine residue found within the consensus sequence C1-X(2)-(S/T)-C2-G of the TSP type-1 repeat domains where C1 and C2 are the first and second cysteine residue of the repeat, respectively. Fucosylated repeats can then be further glycosylated by the addition of a beta-1,3-glucose residue by the glucosyltransferase, B3GALTL. Fucosylation mediates the efficient secretion of ADAMTS family members. Can also be C-glycosylated with one or two mannose molecules on tryptophan residues within the consensus sequence W-X-X-W of the TPRs. N- and C-glycosylations can also facilitate secretion. In terms of tissue distribution, expressed in colon, heart, leukocyte, liver, lung, skeletal muscle, spleen, testis and placenta. Weaker expression in bone marrow, brain tissue, kidney and pancreas. Expression studies in fetal tissues reveal strong expression in heart, kidney, liver, lung and skeletal muscle, but weaker expression in fetal brain and skin.

The protein resides in the secreted. The protein localises to the extracellular space. Its subcellular location is the extracellular matrix. Its function is as follows. Positive regulation of apoptosis. May facilitate FBN1 microfibril biogenesis. This is ADAMTS-like protein 4 (ADAMTSL4) from Homo sapiens (Human).